The primary structure comprises 243 residues: Protein IN2-1 (243 aa).

A disordered region spans residues 1–26 (MAAAAGPSSSVKESLPPALGSTSQPP). One can recognise a GST N-terminal domain in the interval 31 to 112 (GTTRLYICYF…YIDSNFDGPA (82 aa)). Residues K70, V84, and 96–97 (ES) contribute to the glutathione site. In terms of domain architecture, GST C-terminal spans 109–240 (DGPALLPEDA…FLLDLAKSHL (132 aa)).

It belongs to the GST superfamily. HSP26 family. As to expression, leaves and roots. It is more strongly induced in the leaves relative to the roots.

The polypeptide is Protein IN2-1 (IN2-1) (Zea mays (Maize)).